The chain runs to 933 residues: Collagen alpha-2(I) chain (933 aa).

A compositionally biased stretch (gly residues) spans 1–16 (SGGFDFGVGLGPGPMG). Disordered regions lie at residues 1–191 (SGGF…LTGA) and 206–933 (LPGP…AGVR). Low complexity predominate over residues 17-53 (LMGPRGPPGASGAPGPQGFQGPAGEPGEPGQTGPAGA). 2 positions are modified to 4-hydroxyproline: Pro24 and Pro30. A compositionally biased stretch (basic and acidic residues) spans 57 to 72 (KAGEDGHPGKPGRPGE). Residue Lys94 is modified to 5-hydroxylysine; alternate. Lys94 is a glycosylation site (O-linked (Gal...) hydroxylysine; alternate). 3 stretches are compositionally biased toward low complexity: residues 108 to 137 (VGAP…SAGP), 162 to 176 (AGPR…VSGP), and 213 to 228 (PGPV…RGLV). The span at 280-289 (GLRGGPGSRG) shows a compositional bias: gly residues. Pro317 and Pro320 each carry 4-hydroxyproline. Gly residues predominate over residues 413–422 (GVQGGKGEQG). 2 stretches are compositionally biased toward low complexity: residues 468–485 (PGES…SRGP) and 497–507 (EPGVVGAPGTA). Gly residues predominate over residues 508-517 (GPAGSGGLPG). 3 stretches are compositionally biased toward low complexity: residues 540–584 (VGTT…PRGS), 591–611 (VGPA…QPGA), and 627–640 (PTGP…SGPN). Gly residues predominate over residues 644-656 (GPAGGRGDGGPPG). Positions 657–667 (LTGFPGAAGRT) are enriched in low complexity. Gly residues predominate over residues 704–713 (GETGAGGPPG). Low complexity-rich tracts occupy residues 721 to 748 (SGEP…LGLP) and 756 to 781 (LPGV…RGPS). The segment covering 795–807 (AGRDGLPGHKGER) has biased composition (basic and acidic residues). Low complexity-rich tracts occupy residues 809 to 831 (YAGN…VGPA) and 840 to 860 (PGPA…PSGP). Residues 864–874 (RGDKGEGDKGP) show a composition bias toward basic and acidic residues.

Belongs to the fibrillar collagen family. As to quaternary structure, trimers of one alpha 2(I) and two alpha 1(I) chains. Interacts (via C-terminus) with TMEM131 (via PapD-L domain); the interaction is direct and is involved in assembly and TRAPPIII ER-to-Golgi transport complex-dependent secretion of collagen. In terms of processing, prolines at the third position of the tripeptide repeating unit (G-X-Y) are hydroxylated in some or all of the chains. Expressed in bones.

It localises to the secreted. Its subcellular location is the extracellular space. It is found in the extracellular matrix. Its function is as follows. Type I collagen is a member of group I collagen (fibrillar forming collagen). This is Collagen alpha-2(I) chain from Glyptodon sp. (strain SLP-2019) (Giant armadillo).